A 287-amino-acid chain; its full sequence is Uroplakin-3a (287 aa).

Residues Met1–Gly18 form the signal peptide. The Lumenal portion of the chain corresponds to Val19–Gly207. 3 N-linked (GlcNAc...) asparagine glycosylation sites follow: Asn74, Asn139, and Asn170. Residues Met208–Val235 traverse the membrane as a helical segment. The Cytoplasmic portion of the chain corresponds to Asp236 to Asp287. Positions Ala243–Ser274 are disordered. A compositionally biased stretch (polar residues) spans Leu259 to Arg271.

Belongs to the uroplakin-3 family. In terms of assembly, heterodimer with uroplakin-1B (UPK1B). Bladder epithelium.

Its subcellular location is the endoplasmic reticulum membrane. Component of the asymmetric unit membrane (AUM); a highly specialized biomembrane elaborated by terminally differentiated urothelial cells. May play an important role in AUM-cytoskeleton interaction in terminally differentiated urothelial cells. It also contributes to the formation of urothelial glycocalyx which may play an important role in preventing bacterial adherence. The sequence is that of Uroplakin-3a (UPK3A) from Bos taurus (Bovine).